The chain runs to 87 residues: U3-theraphotoxin-Hhn1q (87 aa).

An N-terminal signal peptide occupies residues 1–24; it reads MVNMKASMFLTFAGLVLLFVVCYA. The propeptide occupies 25-52; sequence SESEEKEFPKEMLSSIFAVDNDFKQEER. Disulfide bonds link Cys-54–Cys-67, Cys-61–Cys-72, and Cys-66–Cys-79.

The protein belongs to the neurotoxin 10 (Hwtx-1) family. 51 (Hntx-8) subfamily. Hntx-8 sub-subfamily. In terms of tissue distribution, expressed by the venom gland.

Its subcellular location is the secreted. Ion channel inhibitor. This chain is U3-theraphotoxin-Hhn1q, found in Cyriopagopus hainanus (Chinese bird spider).